Reading from the N-terminus, the 479-residue chain is Signal recognition particle subunit SRP54 1 (479 aa).

Positions 1–295 (MVLAELGGRI…DVKPFVSRLL (295 aa)) are G-domain. GTP-binding positions include 108–115 (GLQGAGKT), 190–194 (DTSGR), and 248–251 (TKMD). Positions 296 to 479 (GKGDWSGLVD…MMGMFGGGGK (184 aa)) are M-domain.

The protein belongs to the GTP-binding SRP family. SRP54 subfamily. As to quaternary structure, component of a signal recognition particle (SRP) complex that consists of a 7SL RNA molecule of 300 nucleotides and six protein subunits: SRP72, SRP68, SRP54, SRP19, SRP14 and SRP9.

The protein resides in the cytoplasm. It is found in the endoplasmic reticulum. The enzyme catalyses GTP + H2O = GDP + phosphate + H(+). In terms of biological role, component of the signal recognition particle (SRP) complex, a ribonucleoprotein complex that mediates the cotranslational targeting of secretory and membrane proteins to the endoplasmic reticulum (ER). As part of the SRP complex, associates with the SRP receptor (SR) component SRPRA to target secretory proteins to the endoplasmic reticulum membrane. Binds to the signal sequence of presecretory proteins when they emerge from the ribosomes. Displays basal GTPase activity, and stimulates reciprocal GTPase activation of the SR subunit SRPRA. Forms a guanosine 5'-triphosphate (GTP)-dependent complex with the SR subunit SRPRA. SR compaction and GTPase mediated rearrangement of SR drive SRP-mediated cotranslational protein translocation into the ER. Requires the presence of SRP9/SRP14 and/or SRP19 to stably interact with RNA. The protein is Signal recognition particle subunit SRP54 1 (SRP-54A) of Arabidopsis thaliana (Mouse-ear cress).